The chain runs to 87 residues: Large ribosomal subunit protein bL31B (87 aa).

This sequence belongs to the bacterial ribosomal protein bL31 family. Type B subfamily. In terms of assembly, part of the 50S ribosomal subunit.

The protein is Large ribosomal subunit protein bL31B of Ralstonia nicotianae (strain ATCC BAA-1114 / GMI1000) (Ralstonia solanacearum).